The following is a 225-amino-acid chain: Ribosomal RNA small subunit methyltransferase G (225 aa).

Residues Gly-71, Leu-76, 121 to 122, and Arg-139 contribute to the S-adenosyl-L-methionine site; that span reads AE. The segment at 204-225 is disordered; that stretch reads VVEARRATPSNGRGRPGRSSRR.

It belongs to the methyltransferase superfamily. RNA methyltransferase RsmG family.

Its subcellular location is the cytoplasm. Its function is as follows. Specifically methylates the N7 position of guanine in position 518 of 16S rRNA. The polypeptide is Ribosomal RNA small subunit methyltransferase G (Mycobacterium sp. (strain JLS)).